The chain runs to 525 residues: Cytochrome P450 monooxygenase tpcC (525 aa).

A helical transmembrane segment spans residues 13-33 (LPVTLVSLLVGSIFYFCYLTV). Residue C457 coordinates heme.

This sequence belongs to the cytochrome P450 family. It depends on heme as a cofactor.

It localises to the membrane. It functions in the pathway secondary metabolite biosynthesis; terpenoid biosynthesis. In terms of biological role, cytochrome P450 monooxygenase; part of the gene cluster that mediates the biosynthesis of terpestacin. The bifunctional terpene synthase tpcA converts isopentenyl diphosphate (IPP) and dimethylallyl diphosphate (DMAPP) into the sesterterpene preterpestacin I. The C-terminal prenyltransferase (PT) domain of tpcA catalyzes formation of GFPP, whereas the N-terminal terpene cyclase (TC) domain catalyzes the cyclization of GFPP into preterpestacin I. The cytochrome P450 monooxygenase tpcB then hydroxylates preterpestacin I to yield 24-hydroxypreterpstacin I (renamed as preterpestacin II) whereas the cytochrome P450 monooxygenase tpcC further hydroxylates preterpestacin II to yield 16,17-dihydroxypreterpestacin II (renamed as preterpestacin III). Finally, the FAD-dependent monooxygenase tpcD converts preterpestacin III into terpestacin. The chain is Cytochrome P450 monooxygenase tpcC from Cochliobolus heterostrophus (strain C5 / ATCC 48332 / race O) (Southern corn leaf blight fungus).